We begin with the raw amino-acid sequence, 317 residues long: Ribosomal large subunit pseudouridine synthase D (317 aa).

In terms of domain architecture, S4 RNA-binding spans 15-89 (WRLDRALASL…IPLEIVFEDE (75 aa)). Aspartate 141 is an active-site residue.

This sequence belongs to the pseudouridine synthase RluA family.

It is found in the cytoplasm. It catalyses the reaction uridine(1911/1915/1917) in 23S rRNA = pseudouridine(1911/1915/1917) in 23S rRNA. In terms of biological role, responsible for synthesis of pseudouridine from uracil at positions 1911, 1915 and 1917 in 23S ribosomal RNA. This chain is Ribosomal large subunit pseudouridine synthase D, found in Zymomonas mobilis subsp. mobilis (strain ATCC 31821 / ZM4 / CP4).